Consider the following 195-residue polypeptide: Probable nicotinate-nucleotide adenylyltransferase (195 aa).

Belongs to the NadD family.

It catalyses the reaction nicotinate beta-D-ribonucleotide + ATP + H(+) = deamido-NAD(+) + diphosphate. It participates in cofactor biosynthesis; NAD(+) biosynthesis; deamido-NAD(+) from nicotinate D-ribonucleotide: step 1/1. Catalyzes the reversible adenylation of nicotinate mononucleotide (NaMN) to nicotinic acid adenine dinucleotide (NaAD). The polypeptide is Probable nicotinate-nucleotide adenylyltransferase (Dictyoglomus thermophilum (strain ATCC 35947 / DSM 3960 / H-6-12)).